The following is a 920-amino-acid chain: Ubiquitin ligase-binding protein BUL2 (920 aa).

Residues 1-10 (MTFTFSTSSR) show a composition bias toward polar residues. Residues 1–89 (MTFTFSTSSR…EENSLEMDCT (89 aa)) are disordered. Thr22 bears the Phosphothreonine mark. Polar residues predominate over residues 35–57 (QQLSSNSTDNSLHPNSGQTPRAS). Basic and acidic residues predominate over residues 73 to 82 (DRLRQEREEN). The PY-motif signature appears at 129 to 133 (FPPSY). The residue at position 557 (Ser557) is a Phosphoserine.

It belongs to the BUL1 family. As to quaternary structure, component of the RSP5-BUL1/2 ubiquitin ligase complex composed of at least RSP5 and BUL1 or BUL2.

Its subcellular location is the cytoplasm. Its pathway is protein modification; protein ubiquitination. Functionally, component of a RSP5 ubiquitin ligase complex which specifies polyubiquitination and intracellular trafficking of the general amino acid permease GAP1 as well as other permeases such as PMA1. The RSP5-BUL1/2 complex is also necessary for the heat-shock element (HSE)-mediated gene expression, nitrogen starvation GLN3-dependent transcription and pressure-induced differential regulation of the 2 tryptophan permeases TAT1 and TAT2. This chain is Ubiquitin ligase-binding protein BUL2 (BUL2), found in Saccharomyces cerevisiae (strain ATCC 204508 / S288c) (Baker's yeast).